A 264-amino-acid polypeptide reads, in one-letter code: MLRCGGRGLLLGLAVAAAAVMAARLMGWWGPRAGFRLFIPEELSRYRGGPGDPGLYLALLGRVYDVSSGRRHYEPGSHYSGFAGRDASRAFVTGDCSEAGLVDDVSDLSAAEMLTLHNWLSFYEKNYVCVGRVTGRFYGEDGLPTPALTQVEAAITRGLEANKLQLQEKQTFPPCNAEWSSARGSRLWCSQKSGGVSRDWIGVPRKLYKPGAKEPRCVCVRTTGPPSGQMPDNPPHRNRGDLDHPNLAEYTGCPPLAITCSFPL.

The signal sequence occupies residues 1-22 (MLRCGGRGLLLGLAVAAAAVMA). In terms of domain architecture, Cytochrome b5 heme-binding spans 35–134 (FRLFIPEELS…KNYVCVGRVT (100 aa)).

It belongs to the cytochrome b5 family. MAPR subfamily.

The protein localises to the secreted. In terms of biological role, heme-binding protein which promotes neuronal but not astrocyte differentiation. In Homo sapiens (Human), this protein is Neuferricin.